Reading from the N-terminus, the 256-residue chain is MQTEQQRAVTRLCIQCGLFLLQHGAESALVDELSSRLGRALGMDSVESSISSNAIVLTTIKDGQCLTSTRKNHDRGINMHVVTEVQHIVILAEHHLLDYKGVEKRFSQIQPLRYPRWLVALMVGLSCACFCKLNNGGWDGAVITFFASTTAMYIRQLLAQRHLHPQINFCLTAFAATTISGLLLQLPTFSNTPTIAMAASVLLLVPGFPLINAVADMFKGHINTGLARWAIASLLTLATCVGVVMALTIWGLRGWV.

The Cytoplasmic portion of the chain corresponds to 1-113; sequence MQTEQQRAVT…KRFSQIQPLR (113 aa). The helical transmembrane segment at 114–135 threads the bilayer; sequence YPRWLVALMVGLSCACFCKLNN. Residues 136–140 lie on the Periplasmic side of the membrane; that stretch reads GGWDG. Residues 141 to 158 form a helical membrane-spanning segment; sequence AVITFFASTTAMYIRQLL. Over 159–168 the chain is Cytoplasmic; the sequence is AQRHLHPQIN. A helical membrane pass occupies residues 169–189; sequence FCLTAFAATTISGLLLQLPTF. At 190-194 the chain is on the periplasmic side; sequence SNTPT. A helical transmembrane segment spans residues 195 to 215; the sequence is IAMAASVLLLVPGFPLINAVA. Over 216 to 228 the chain is Cytoplasmic; it reads DMFKGHINTGLAR. A helical membrane pass occupies residues 229 to 249; the sequence is WAIASLLTLATCVGVVMALTI. Residues 250-256 lie on the Periplasmic side of the membrane; it reads WGLRGWV.

Belongs to the ThrE exporter (TC 2.A.79) family. As to quaternary structure, the transporter is composed of YjjB and YjjP.

The protein resides in the cell inner membrane. Involved in succinate export with YjjB. Both proteins are required for export. Contributes to succinate production under both aerobic and anaerobic conditions. The protein is Probable succinate transporter subunit YjjP (yjjP) of Escherichia coli (strain K12).